Reading from the N-terminus, the 467-residue chain is Dimethylamine methyltransferase MtbB1 (467 aa).

O356 is a non-standard amino acid (pyrrolysine).

Belongs to the dimethylamine methyltransferase family.

The enzyme catalyses Co(I)-[dimethylamine-specific corrinoid protein] + dimethylamine + H(+) = methyl-Co(III)-[dimethylamine-specific corrinoid protein] + methylamine. It participates in one-carbon metabolism; methanogenesis from dimethylamine. In terms of biological role, catalyzes the transfer of a methyl group from dimethylamine to the corrinoid cofactor of MtbC. This chain is Dimethylamine methyltransferase MtbB1 (mtbB1), found in Methanosarcina acetivorans (strain ATCC 35395 / DSM 2834 / JCM 12185 / C2A).